A 756-amino-acid polypeptide reads, in one-letter code: Amine oxidase [copper-containing] 2 (756 aa).

Residues 1–4 (MHLK) lie on the Cytoplasmic side of the membrane. Residues 5 to 25 (IVLAFLALSLITIFALAYVLL) traverse the membrane as a helical segment. Residues 26–756 (TSPGGSSQPP…DLPPFSYHGF (731 aa)) are Extracellular-facing. Residues Asn133, Asn198, and Asn226 are each glycosylated (N-linked (GlcNAc...) asparagine). The active-site Proton acceptor is Asp380. Cys398 and Cys424 are joined by a disulfide. Catalysis depends on Tyr465, which acts as the Schiff-base intermediate with substrate; via topaquinone. Position 465 is a 2',4',5'-topaquinone (Tyr465). Cu(2+)-binding residues include His516 and His518. Ca(2+) is bound by residues Asp525, Leu526, Asp527, Glu568, Glu637, Phe659, and Asn661. N-linked (GlcNAc...) asparagine glycosylation is present at Asn662. Ca(2+) is bound by residues Glu663, Asp669, and Leu670. His680 is a binding site for Cu(2+). Residues Cys730 and Cys737 are joined by a disulfide bond.

It belongs to the copper/topaquinone oxidase family. In terms of assembly, homodimer; disulfide-linked. Probably forms heterodimers with AOC3. Cu(2+) serves as cofactor. Requires Ca(2+) as cofactor. L-topaquinone is required as a cofactor. In terms of processing, topaquinone (TPQ) is generated by copper-dependent autoxidation of a specific tyrosyl residue. Expressed in many tissues including adipocytes with higher expression in retina where it is active. As to expression, not expressed in testis. In terms of tissue distribution, not expressed in thymus.

It localises to the cell membrane. The protein localises to the cytoplasm. The enzyme catalyses 2-phenylethylamine + O2 + H2O = 2-phenylacetaldehyde + H2O2 + NH4(+). The catalysed reaction is tryptamine + O2 + H2O = indole-3-acetaldehyde + H2O2 + NH4(+). It carries out the reaction tyramine + O2 + H2O = (4-hydroxyphenyl)acetaldehyde + H2O2 + NH4(+). In terms of biological role, catalyzes the oxidative deamination of primary amines to the corresponding aldehydes with the concomitant production of hydrogen peroxide and ammonia. Has a preference for 2-phenylethylamine, tryptamine and tyramine. Could also act on methylamine and benzylamine but much less efficiently. In Homo sapiens (Human), this protein is Amine oxidase [copper-containing] 2.